Reading from the N-terminus, the 1841-residue chain is Sucrase-isomaltase, intestinal (1841 aa).

Residues 1 to 12 (MAKKKFSALEIS) lie on the Cytoplasmic side of the membrane. At Ser-7 the chain carries Phosphoserine; by PKA. The helical; Signal-anchor for type II membrane protein transmembrane segment at 13 to 32 (LIVLFIIVTAIAIALVTVLA) threads the bilayer. The Lumenal portion of the chain corresponds to 33-1841 (TKVPAVEEIK…LDEPIQITWS (1809 aa)). Residues 42–81 (KSPTPTSNSTPTSTPTSTSTPTSTSTPSPGKCPPEQGEPI) are disordered. Positions 43–70 (SPTPTSNSTPTSTPTSTSTPTSTSTPSP) are enriched in low complexity. Residues 71-120 (GKCPPEQGEPINERINCIPEQHPTKAICEERGCCWRPWNNTVIPWCFFAD) form the P-type 1 domain. 3 disulfide bridges follow: Cys-73/Cys-104, Cys-87/Cys-103, and Cys-98/Cys-116. N-linked (GlcNAc...) asparagine glycosylation occurs at Asn-109. The segment at 120–1013 (DNHGYNAESI…ELQLNPPNAR (894 aa)) is isomaltase. Residues Asp-274 and Asp-398 each coordinate substrate. Sulfotyrosine occurs at positions 401 and 410. N-linked (GlcNAc...) asparagine glycosylation occurs at Asn-464. Residue Asp-514 is the Nucleophile; for isomaltase activity of the active site. Residue Arg-599 coordinates substrate. The active-site For isomaltase activity is Asp-615. Cysteines 646 and 657 form a disulfide. His-673 is a binding site for substrate. Residues Asn-758, Asn-765, Asn-867, and Asn-910 are each glycosylated (N-linked (GlcNAc...) asparagine). Residues 936-984 (RWCRTFSDNEKFTCYPDVGTATEGTCTQRGCLWQPVSGLSNVPPYYFPP) form the P-type 2 domain. Residues 1014 to 1841 (IKLPSNPIST…LDEPIQITWS (828 aa)) form a sucrase region. N-linked (GlcNAc...) asparagine glycans are attached at residues Asn-1240, Asn-1308, Asn-1345, Asn-1359, and Asn-1373. Tyr-1387 is subject to Sulfotyrosine. The active-site Nucleophile; for sucrase activity is the Asp-1399. Glu-1402 functions as the For sucrase activity in the catalytic mechanism. Asn-1485 carries an N-linked (GlcNAc...) asparagine glycan. Asp-1512 acts as the Proton donor; for sucrase activity in catalysis. N-linked (GlcNAc...) asparagine glycosylation is found at Asn-1513, Asn-1575, Asn-1762, and Asn-1829.

The protein belongs to the glycosyl hydrolase 31 family. The resulting sucrase and isomaltase subunits stay associated with one another in a complex by non-covalent linkages. The precursor is proteolytically cleaved when exposed to pancreatic proteases in the intestinal lumen. In terms of processing, sulfated.

The protein localises to the apical cell membrane. The enzyme catalyses Hydrolysis of sucrose and maltose by an alpha-D-glucosidase-type action.. The catalysed reaction is Hydrolysis of (1-&gt;6)-alpha-D-glucosidic linkages in some oligosaccharides produced from starch and glycogen by alpha-amylase, and in isomaltose.. In terms of biological role, plays an important role in the final stage of carbohydrate digestion. Isomaltase activity is specific for both alpha-1,4- and alpha-1,6-oligosaccharides. In Rattus norvegicus (Rat), this protein is Sucrase-isomaltase, intestinal (Si).